A 156-amino-acid chain; its full sequence is Ribosome maturation factor RimP (156 aa).

It belongs to the RimP family.

It localises to the cytoplasm. Its function is as follows. Required for maturation of 30S ribosomal subunits. The chain is Ribosome maturation factor RimP from Prochlorococcus marinus (strain NATL2A).